Reading from the N-terminus, the 93-residue chain is C-C motif chemokine 17 (93 aa).

The N-terminal stretch at 1–23 (MMSLQMLLLAALLLGTSLQHASA) is a signal peptide. 2 cysteine pairs are disulfide-bonded: Cys-33–Cys-57 and Cys-34–Cys-73.

It belongs to the intercrine beta (chemokine CC) family.

The protein localises to the secreted. Chemokine, which displays chemotactic activity for T lymphocytes, preferentially Th2 cells, but not monocytes or granulocytes. Therefore plays an important role in a wide range of inflammatory and immunological processes. Acts by binding to CCR4 at T-cell surface. Mediates GM-CSF/CSF2-driven pain and inflammation. In the brain, required to maintain the typical, highly branched morphology of hippocampal microglia under homeostatic conditions. May be important for the appropriate adaptation of microglial morphology and synaptic plasticity to acute lipopolysaccharide (LPS)-induced neuroinflammation. Plays a role in wound healing, mainly by inducing fibroblast migration into the wound. In Rattus norvegicus (Rat), this protein is C-C motif chemokine 17 (Ccl17).